Here is a 120-residue protein sequence, read N- to C-terminus: Putative defensin-like protein 179 (120 aa).

A signal peptide spans 1–27 (MERTSTSLLFLLSLLIIFASAVNQIRA). Cystine bridges form between Cys37–Cys56, Cys40–Cys63, Cys44–Cys65, Cys74–Cys120, Cys85–Cys105, Cys90–Cys114, and Cys94–Cys116.

The protein belongs to the DEFL family.

The protein resides in the secreted. The chain is Putative defensin-like protein 179 (LCR57) from Arabidopsis thaliana (Mouse-ear cress).